Consider the following 316-residue polypeptide: Apolipoprotein E (316 aa).

The first 18 residues, 1-18 (MKVLWVALVVALLAGCQA), serve as a signal peptide directing secretion. 8 consecutive repeat copies span residues 79–100 (VLME…GQLA), 101–122 (PMAQ…ARLG), 123–144 (SDME…AMLG), 145–166 (QSTE…KRLL), 167–188 (RDAD…EGAE), 189–210 (RSVS…SRAA), 211–232 (TLST…QKLH), and 233–254 (GRLE…QQLE). Positions 79–254 (VLMEETMKEV…RLDKMRQQLE (176 aa)) are 8 X 22 AA approximate tandem repeats. Methionine sulfoxide is present on M142. A Phosphoserine modification is found at S146. An LDL and other lipoprotein receptors binding region spans residues 157 to 167 (HLRKLRKRLLR). 161-164 (LRKR) lines the heparin pocket. The lipid-binding and lipoprotein association stretch occupies residues 209-289 (AATLSTQVGQ…SWFEPLVEDM (81 aa)). 228 to 235 (RQKLHGRL) lines the heparin pocket. Positions 265–316 (SQIRLQAEAFQARLRSWFEPLVEDMQRQWAGLVEKVQLALHLSPTSPPSENH) are homooligomerization. The interval 277 to 289 (RLRSWFEPLVEDM) is specificity for association with VLDL.

The protein belongs to the apolipoprotein A1/A4/E family. As to quaternary structure, homotetramer. May interact with ABCA1; functionally associated with ABCA1 in the biogenesis of HDLs. May interact with APP/A4 amyloid-beta peptide; the interaction is extremely stable in vitro but its physiological significance is unclear. May interact with MAPT. May interact with MAP2. In the cerebrospinal fluid, interacts with secreted SORL1. Interacts with PMEL; this allows the loading of PMEL luminal fragment on ILVs to induce fibril nucleation. In terms of processing, APOE exists as multiple glycosylated and sialylated glycoforms within cells and in plasma. The extent of glycosylation and sialylation are tissue and context specific. Post-translationally, glycated in plasma VLDL. Phosphorylated by FAM20C in the extracellular medium.

It is found in the secreted. It localises to the extracellular space. The protein localises to the extracellular matrix. Its subcellular location is the extracellular vesicle. The protein resides in the endosome. It is found in the multivesicular body. Functionally, APOE is an apolipoprotein, a protein associating with lipid particles, that mainly functions in lipoprotein-mediated lipid transport between organs via the plasma and interstitial fluids. APOE is a core component of plasma lipoproteins and is involved in their production, conversion and clearance. Apolipoproteins are amphipathic molecules that interact both with lipids of the lipoprotein particle core and the aqueous environment of the plasma. As such, APOE associates with chylomicrons, chylomicron remnants, very low density lipoproteins (VLDL) and intermediate density lipoproteins (IDL) but shows a preferential binding to high-density lipoproteins (HDL). It also binds a wide range of cellular receptors including the LDL receptor/LDLR and the very low-density lipoprotein receptor/VLDLR that mediate the cellular uptake of the APOE-containing lipoprotein particles. Finally, APOE also has a heparin-binding activity and binds heparan-sulfate proteoglycans on the surface of cells, a property that supports the capture and the receptor-mediated uptake of APOE-containing lipoproteins by cells. This is Apolipoprotein E (APOE) from Ovis aries (Sheep).